The primary structure comprises 224 residues: uncharacterized protein (224 aa).

4 consecutive transmembrane segments (helical) span residues A25–I45, V56–P76, E107–V127, and I149–F169.

The protein localises to the cell membrane. This is an uncharacterized protein from Mycoplasma pneumoniae (strain ATCC 29342 / M129 / Subtype 1) (Mycoplasmoides pneumoniae).